A 236-amino-acid chain; its full sequence is tRNA1(Val) (adenine(37)-N6)-methyltransferase (236 aa).

Belongs to the methyltransferase superfamily. tRNA (adenine-N(6)-)-methyltransferase family.

It is found in the cytoplasm. It carries out the reaction adenosine(37) in tRNA1(Val) + S-adenosyl-L-methionine = N(6)-methyladenosine(37) in tRNA1(Val) + S-adenosyl-L-homocysteine + H(+). Functionally, specifically methylates the adenine in position 37 of tRNA(1)(Val) (anticodon cmo5UAC). The protein is tRNA1(Val) (adenine(37)-N6)-methyltransferase of Histophilus somni (strain 129Pt) (Haemophilus somnus).